The primary structure comprises 147 residues: Hemoglobin subunit beta (147 aa).

The Globin domain occupies 3–147; it reads EWTDKERSII…VVSALGKQYH (145 aa). Residues His64 and His93 each contribute to the heme b site.

It belongs to the globin family. As to quaternary structure, hb1 is a heterotetramer of two alpha chains and two beta chains. As to expression, red blood cells.

Involved in oxygen transport from gills to the various peripheral tissues. This chain is Hemoglobin subunit beta (hbb), found in Trematomus bernacchii (Emerald rockcod).